A 263-amino-acid chain; its full sequence is Regulatory protein RecX (263 aa).

Belongs to the RecX family.

Its subcellular location is the cytoplasm. Modulates RecA activity. The polypeptide is Regulatory protein RecX (Bacillus pumilus (strain SAFR-032)).